Reading from the N-terminus, the 213-residue chain is MKFFIDTANLEEIKHAHELGILAGVTTNPSLVAKENVSFHDRLREITSIVSGSVSAEVISTDAPGMIEEGEELAKIAPNITIKVPMTPEGLKAVKAFSEKGIKTNVTLVFTANQALLAARAGATYVSPFLGRLDDIGHNGLELISTIADIFNIHGIETEIIAASIRHPHHVTEAALRGAHIATVPYKVLMQLFNHPLTDQGIEKFLADWNRQQ.

Lysine 83 acts as the Schiff-base intermediate with substrate in catalysis.

It belongs to the transaldolase family. Type 3B subfamily.

It is found in the cytoplasm. It catalyses the reaction D-sedoheptulose 7-phosphate + D-glyceraldehyde 3-phosphate = D-erythrose 4-phosphate + beta-D-fructose 6-phosphate. It participates in carbohydrate degradation; pentose phosphate pathway; D-glyceraldehyde 3-phosphate and beta-D-fructose 6-phosphate from D-ribose 5-phosphate and D-xylulose 5-phosphate (non-oxidative stage): step 2/3. Transaldolase is important for the balance of metabolites in the pentose-phosphate pathway. The sequence is that of Probable transaldolase from Geobacillus thermodenitrificans (strain NG80-2).